Reading from the N-terminus, the 344-residue chain is Ribosomal RNA large subunit methyltransferase Cfr (344 aa).

The active-site Proton acceptor is the Glu90. A Radical SAM core domain is found at 97–330 (KQGWESFCIS…ATVRTQFGSE (234 aa)). Cys104 and Cys335 form a disulfide bridge. The [4Fe-4S] cluster site is built by Cys111, Cys115, and Cys118. S-adenosyl-L-methionine contacts are provided by residues 157–158 (GE), Ser188, 211–213 (SLH), and Asn292. The active-site S-methylcysteine intermediate is the Cys335.

Belongs to the radical SAM superfamily. RlmN family. Cfr subfamily. Requires [4Fe-4S] cluster as cofactor.

It is found in the cytoplasm. It carries out the reaction adenosine(2503) in 23S rRNA + 2 reduced [2Fe-2S]-[ferredoxin] + 2 S-adenosyl-L-methionine = 8-methyladenosine(2503) in 23S rRNA + 5'-deoxyadenosine + L-methionine + 2 oxidized [2Fe-2S]-[ferredoxin] + S-adenosyl-L-homocysteine. Functionally, specifically methylates position 8 of adenine 2503 in 23S rRNA. Confers resistance to some classes of antibiotics. This Clostridium botulinum (strain Loch Maree / Type A3) protein is Ribosomal RNA large subunit methyltransferase Cfr.